Here is a 494-residue protein sequence, read N- to C-terminus: Neuronal acetylcholine receptor subunit alpha-6 (494 aa).

Positions Met-1–Phe-25 are cleaved as a signal peptide. Topologically, residues Lys-26–Leu-239 are extracellular. Residues Asn-54 and Asn-171 are each glycosylated (N-linked (GlcNAc...) asparagine). Intrachain disulfides connect Cys-158–Cys-172 and Cys-222–Cys-223. 3 consecutive transmembrane segments (helical) span residues Pro-240 to Leu-264, Val-272 to Thr-290, and Tyr-306 to Ile-327. The Cytoplasmic segment spans residues His-328–Arg-465. Ser-401 is modified (phosphoserine). A helical membrane pass occupies residues Val-466–Leu-484.

This sequence belongs to the ligand-gated ion channel (TC 1.A.9) family. Acetylcholine receptor (TC 1.A.9.1) subfamily. Alpha-6/CHRNA6 sub-subfamily. As to quaternary structure, neuronal AChR is composed of two different types of subunits: alpha and non-alpha (beta). CHRNA6/alpha-6 subunit can be combined to CHRNB2/beta-2, CHRNA4/alpha-4 and CHRNB3/beta-3 to give rise to functional receptors. Heteropentamers containing CHRNB3 have an stoichiometry of (CHRNA6:CHRNB2)2:CHRNB3. Interacts with LYPD6.

The protein resides in the synaptic cell membrane. The catalysed reaction is Ca(2+)(in) = Ca(2+)(out). It carries out the reaction K(+)(in) = K(+)(out). The enzyme catalyses Na(+)(in) = Na(+)(out). With respect to regulation, activated by a myriad of ligands such as acetylcholine, cytisine and nicotine. CHRNA6 nAChR activity is inhibited by the antagonists alpha-conotoxin MII and PIA, a small disulfide-constrained peptides from cone snails. In terms of biological role, component of neuronal acetylcholine receptors (nAChRs) that function as pentameric, ligand-gated cation channels with high calcium permeability among other activities. nAChRs are excitatory neurotrasnmitter receptors formed by a collection of nAChR subunits known to mediate synaptic transmission in the nervous system and the neuromuscular junction. Each nAchR subunit confers differential attributes to channel properties, including activation, deactivation and desensitization kinetics, pH sensitivity, cation permeability, and binding to allosteric modulators. CHRNA6 forms pentameric channels with CHRNB2, CHRNB3 and CHRNA4 that exhibit high sensitivity to ACh and nicotine and are predominantly expressed in only a few brain areas, including dopaminergic neurons, norepirephrine neurons and cells of the visual system. nAChrs containing CHRNA6 subunits mediate endogenous cholinergic modulation of dopamine and gamma-aminobutyric acid (GABA) release in response to nicotine at nerve terminals. This chain is Neuronal acetylcholine receptor subunit alpha-6, found in Homo sapiens (Human).